Reading from the N-terminus, the 391-residue chain is 4-hydroxy-3-methylbut-2-en-1-yl diphosphate synthase (flavodoxin) (391 aa).

4 residues coordinate [4Fe-4S] cluster: Cys-281, Cys-284, Cys-316, and Glu-323. Residues 372–391 form a disordered region; sequence EMGGEDGQGGIKGSPVVSVS.

It belongs to the IspG family. [4Fe-4S] cluster serves as cofactor.

It catalyses the reaction (2E)-4-hydroxy-3-methylbut-2-enyl diphosphate + oxidized [flavodoxin] + H2O + 2 H(+) = 2-C-methyl-D-erythritol 2,4-cyclic diphosphate + reduced [flavodoxin]. It participates in isoprenoid biosynthesis; isopentenyl diphosphate biosynthesis via DXP pathway; isopentenyl diphosphate from 1-deoxy-D-xylulose 5-phosphate: step 5/6. Functionally, converts 2C-methyl-D-erythritol 2,4-cyclodiphosphate (ME-2,4cPP) into 1-hydroxy-2-methyl-2-(E)-butenyl 4-diphosphate. The polypeptide is 4-hydroxy-3-methylbut-2-en-1-yl diphosphate synthase (flavodoxin) (Renibacterium salmoninarum (strain ATCC 33209 / DSM 20767 / JCM 11484 / NBRC 15589 / NCIMB 2235)).